The sequence spans 509 residues: MIIKKKESFKSPGRLWRVTKIRKLTAAKKNELQNRKCNQASNEEKKILYKSNFLDRFIPSKANSDAFRIMENAFTEKLNTQESLLPDILNLNVKGVLHYKDNKKQKTTRLIESTNYQRQTIHGASSSLVIEVEENGHLSNMQGSLYETPLRILDAPGLLDDFYISPLAWSTNGELAVALAQNVYLWSEISGPSIMELSPTTYEVSSLAYSSDGGFLAIARVNGFVEIWNRKTKNNRCDYKFHHDGDISCMAWSPINWTLLVGGSTGNIYVYRRTKSMMRRVHTIKKVHQEQVCGLEWNYDGTQFASGGNDNLVCIFDIDSLENKKFYWIHLAAVKALAFCPWQKSLLAVGTGSNDQQIYFYDTFRGHRIHSLFCGAQVTSVIWSRRYKEFCYSLGYSPEGTNSSLIVYRWPQLTKVFDIPSAAIDGWGQDLRTIMAIHTHRKYSNNTWEEGEYVVVANSDETVKFYKIWGNEMQEIHNDRVLYREGIFGSHILEMLENIPEQVLTNGVR.

WD repeat units lie at residues 159 to 196 (LDDFYISPLAWSTNGELAVALAQNVYLWSEISGPSIME), 199 to 238 (PTTYEVSSLAYSSDGGFLAIARVNGFVEIWNRKTKNNRCD), 242 to 281 (HHDGDISCMAWSPINWTLLVGGSTGNIYVYRRTKSMMRRV), 287 to 326 (VHQEQVCGLEWNYDGTQFASGGNDNLVCIFDIDSLENKKF), 329 to 371 (IHLA…RIHS), and 437 to 477 (IHTH…QEIH).

The protein belongs to the WD repeat CDC20/Fizzy family.

The protein localises to the nucleus. Its function is as follows. Has a role in meiosis. The protein is Meiotic fizzy-related protein 2 (mfr2) of Schizosaccharomyces pombe (strain 972 / ATCC 24843) (Fission yeast).